Reading from the N-terminus, the 188-residue chain is Large ribosomal subunit protein bL35m (188 aa).

Belongs to the bacterial ribosomal protein bL35 family.

The protein resides in the mitochondrion. This chain is Large ribosomal subunit protein bL35m (MRPL35), found in Bos taurus (Bovine).